A 341-amino-acid polypeptide reads, in one-letter code: Tryptophan--tRNA ligase (341 aa).

Residues 11 to 13 (RPT) and 19 to 20 (GH) contribute to the ATP site. A 'HIGH' region motif is present at residues 12–20 (PTGKLHIGH). Asp-140 contributes to the L-tryptophan binding site. Residues 152–154 (GTD), Leu-194, and 202–206 (KMSKS) contribute to the ATP site. The short motif at 202–206 (KMSKS) is the 'KMSKS' region element.

Belongs to the class-I aminoacyl-tRNA synthetase family. Homodimer.

Its subcellular location is the cytoplasm. The enzyme catalyses tRNA(Trp) + L-tryptophan + ATP = L-tryptophyl-tRNA(Trp) + AMP + diphosphate + H(+). In terms of biological role, catalyzes the attachment of tryptophan to tRNA(Trp). This Streptococcus agalactiae serotype III (strain NEM316) protein is Tryptophan--tRNA ligase.